The chain runs to 359 residues: Agropine synthesis conjugase (359 aa).

Positions 28–171 (TVAKFGRATA…IGGILNEREN (144 aa)) constitute an SIS domain.

This Rhizobium rhizogenes (Agrobacterium rhizogenes) protein is Agropine synthesis conjugase (mas2).